The chain runs to 548 residues: T-complex protein 1 subunit theta (548 aa).

Residues glutamine 527–alanine 548 are disordered.

Belongs to the TCP-1 chaperonin family. As to quaternary structure, heterooligomeric complex.

The protein localises to the cytoplasm. Its function is as follows. Molecular chaperone; assists the folding of proteins upon ATP hydrolysis. Known to play a role, in vitro, in the folding of actin and tubulin. Required for correct subcellular localization of pgl-1. The chain is T-complex protein 1 subunit theta (cct-8) from Caenorhabditis elegans.